A 413-amino-acid chain; its full sequence is ATP-dependent (S)-NAD(P)H-hydrate dehydratase (413 aa).

One can recognise a YjeF C-terminal domain in the interval 98 to 402 (NLNHFLSYVP…KSVPNALVWG (305 aa)). (6S)-NADPHX-binding positions include G199 and 252–258 (NFVEYRA). ATP contacts are provided by residues 292–296 (KGQED) and 311–320 (GMPRRCGGQG). D321 contributes to the (6S)-NADPHX binding site.

This sequence belongs to the NnrD/CARKD family. It depends on Mg(2+) as a cofactor.

The enzyme catalyses (6S)-NADHX + ATP = ADP + phosphate + NADH + H(+). It carries out the reaction (6S)-NADPHX + ATP = ADP + phosphate + NADPH + H(+). Its function is as follows. Catalyzes the dehydration of the S-form of NAD(P)HX at the expense of ATP, which is converted to ADP. Together with NAD(P)HX epimerase, which catalyzes the epimerization of the S- and R-forms, the enzyme allows the repair of both epimers of NAD(P)HX, a damaged form of NAD(P)H that is a result of enzymatic or heat-dependent hydration. The polypeptide is ATP-dependent (S)-NAD(P)H-hydrate dehydratase (Heterostelium pallidum (strain ATCC 26659 / Pp 5 / PN500) (Cellular slime mold)).